The following is a 142-amino-acid chain: Hemoglobin subunit alpha-1 (142 aa).

Residues 2-142 form the Globin domain; that stretch reads LLSADDKKHI…VSTVLTSKYR (141 aa). Residue H59 coordinates O2. Position 88 (H88) interacts with heme b.

The protein belongs to the globin family. In terms of assembly, heterotetramer of two alpha chains and two beta chains. As to expression, red blood cells.

Functionally, involved in oxygen transport from the lung to the various peripheral tissues. The protein is Hemoglobin subunit alpha-1 (hba1) of Xenopus laevis (African clawed frog).